A 238-amino-acid polypeptide reads, in one-letter code: Probable tetraspanin tspC (238 aa).

At 1–16 (MVNTRDFLPKTTHYLK) the chain is on the cytoplasmic side. The chain crosses the membrane as a helical span at residues 17–37 (VPIIGLNAILWLLGLVLIVVG). The Extracellular segment spans residues 38-69 (SVCISFFSNFKEFTKESGYKNALSNLTTSAPT). Asn62 carries an N-linked (GlcNAc...) asparagine glycan. The chain crosses the membrane as a helical span at residues 70–90 (GVLVIGIFFILLTLVGCFVAY). The Cytoplasmic portion of the chain corresponds to 91-93 (KEK). A helical transmembrane segment spans residues 94-114 (LVGLVLYTMLMLILLVVLIGI). Topologically, residues 115–197 (GGKALTLDKE…GIFTKQVSSK (83 aa)) are extracellular. 2 N-linked (GlcNAc...) asparagine glycosylation sites follow: Asn143 and Asn164. The chain crosses the membrane as a helical span at residues 198–218 (LVLVGIAGVVIGCIEFVAMAL). Over 219–238 (SLFLIIRICRSPRSRAYDQY) the chain is Cytoplasmic.

It belongs to the tetraspanin (TM4SF) family.

Its subcellular location is the membrane. In Dictyostelium discoideum (Social amoeba), this protein is Probable tetraspanin tspC (tspC).